The primary structure comprises 197 residues: 3-isopropylmalate dehydratase small subunit (197 aa).

This sequence belongs to the LeuD family. LeuD type 1 subfamily. As to quaternary structure, heterodimer of LeuC and LeuD.

It carries out the reaction (2R,3S)-3-isopropylmalate = (2S)-2-isopropylmalate. The protein operates within amino-acid biosynthesis; L-leucine biosynthesis; L-leucine from 3-methyl-2-oxobutanoate: step 2/4. Its function is as follows. Catalyzes the isomerization between 2-isopropylmalate and 3-isopropylmalate, via the formation of 2-isopropylmaleate. The sequence is that of 3-isopropylmalate dehydratase small subunit from Mycobacterium sp. (strain KMS).